The primary structure comprises 475 residues: Ankyrin repeat, SAM and basic leucine zipper domain-containing protein 1 (475 aa).

The segment at 1 to 25 is disordered; it reads MAASALRGLPVAGGGESSESEDDGW. Phosphoserine is present on residues Ser-17, Ser-18, and Ser-20. 6 ANK repeats span residues 45–74, 78–107, 110–144, 148–177, 181–210, and 214–243; these read EKKE…SVDS, YGWT…NASF, DKQS…DPNV, RLMT…EVNT, NGYT…NKML, and DGKM…PLEG. The SAM domain maps to 272–334; it reads SYTAFGDLEV…KILAALKELQ (63 aa).

As to quaternary structure, interacts with DDX4, PIWIL1, RANBP9 and TDRD1.

Its subcellular location is the cytoplasm. Functionally, plays a central role during spermatogenesis by repressing transposable elements and preventing their mobilization, which is essential for the germline integrity. Acts via the piRNA metabolic process, which mediates the repression of transposable elements during meiosis by forming complexes composed of piRNAs and Piwi proteins and governs the methylation and subsequent repression of transposons. Its association with pi-bodies suggests a participation in the primary piRNAs metabolic process. Required prior to the pachytene stage to facilitate the production of multiple types of piRNAs, including those associated with repeats involved in the regulation of retrotransposons. May act by mediating protein-protein interactions during germ cell maturation. The polypeptide is Ankyrin repeat, SAM and basic leucine zipper domain-containing protein 1 (ASZ1) (Pan troglodytes (Chimpanzee)).